A 310-amino-acid chain; its full sequence is Protoheme IX farnesyltransferase (310 aa).

Helical transmembrane passes span 26–46 (VMSL…ATVH), 47–67 (PMIA…SGAL), 95–115 (GEAL…LGLA), 118–138 (LFAA…YSMW), 147–167 (IVIG…VATG), 174–194 (LFMF…LALF), 220–240 (VLAY…TGIG), 243–263 (LYLV…VRIW), and 281–301 (FFRF…AEAA).

This sequence belongs to the UbiA prenyltransferase family. Protoheme IX farnesyltransferase subfamily. In terms of assembly, interacts with CtaA.

The protein resides in the cell inner membrane. The catalysed reaction is heme b + (2E,6E)-farnesyl diphosphate + H2O = Fe(II)-heme o + diphosphate. It participates in porphyrin-containing compound metabolism; heme O biosynthesis; heme O from protoheme: step 1/1. Converts heme B (protoheme IX) to heme O by substitution of the vinyl group on carbon 2 of heme B porphyrin ring with a hydroxyethyl farnesyl side group. This is Protoheme IX farnesyltransferase from Cereibacter sphaeroides (strain ATCC 17025 / ATH 2.4.3) (Rhodobacter sphaeroides).